Here is an 80-residue protein sequence, read N- to C-terminus: Trefoil factor 3 (80 aa).

Positions 1 to 21 are cleaved as a signal peptide; the sequence is MEARVLWLLALVLALGSSSLA. Positions 30–73 constitute a P-type domain; the sequence is NLCAVPAKNRVDCGYPEISPEQCVNRGCCFDSSIPEVPWCFKPL. Disulfide bonds link Cys32–Cys58, Cys42–Cys57, and Cys52–Cys69.

As to quaternary structure, monomer. Homodimer; disulfide-linked.

The protein localises to the secreted. It is found in the extracellular space. The protein resides in the extracellular matrix. It localises to the cytoplasm. Involved in the maintenance and repair of the intestinal mucosa. Promotes the mobility of epithelial cells in healing processes (motogen). The polypeptide is Trefoil factor 3 (TFF3) (Felis catus (Cat)).